The following is a 163-amino-acid chain: Urease accessory protein UreE (163 aa).

The segment at 130–163 (PFEPEPGAYGGGHGHTHSHDHSHQHDPAGHAHEH) is disordered. Positions 146–163 (HSHDHSHQHDPAGHAHEH) are enriched in basic and acidic residues.

This sequence belongs to the UreE family.

It localises to the cytoplasm. In terms of biological role, involved in urease metallocenter assembly. Binds nickel. Probably functions as a nickel donor during metallocenter assembly. In Alkalilimnicola ehrlichii (strain ATCC BAA-1101 / DSM 17681 / MLHE-1), this protein is Urease accessory protein UreE.